A 364-amino-acid chain; its full sequence is Dihydroflavonol 4-reductase (364 aa).

2 residues coordinate NADP(+): Lys-45 and Tyr-164.

The protein belongs to the NAD(P)-dependent epimerase/dehydratase family. Dihydroflavonol-4-reductase subfamily.

The catalysed reaction is a (2R,3S,4S)-leucoanthocyanidin + NADP(+) = a (2R,3R)-dihydroflavonol + NADPH + H(+). It catalyses the reaction (2S)-flavan-4-ol + NADP(+) = (2S)-flavanone + NADPH + H(+). The protein operates within pigment biosynthesis; anthocyanin biosynthesis. Its function is as follows. Bifunctional enzyme involved in flavonoid metabolism. The sequence is that of Dihydroflavonol 4-reductase (F) from Callistephus chinensis (China aster).